The following is a 310-amino-acid chain: Methionyl-tRNA formyltransferase (310 aa).

110–113 (SLLP) contacts (6S)-5,6,7,8-tetrahydrofolate.

The protein belongs to the Fmt family.

It carries out the reaction L-methionyl-tRNA(fMet) + (6R)-10-formyltetrahydrofolate = N-formyl-L-methionyl-tRNA(fMet) + (6S)-5,6,7,8-tetrahydrofolate + H(+). Attaches a formyl group to the free amino group of methionyl-tRNA(fMet). The formyl group appears to play a dual role in the initiator identity of N-formylmethionyl-tRNA by promoting its recognition by IF2 and preventing the misappropriation of this tRNA by the elongation apparatus. The protein is Methionyl-tRNA formyltransferase of Streptomyces avermitilis (strain ATCC 31267 / DSM 46492 / JCM 5070 / NBRC 14893 / NCIMB 12804 / NRRL 8165 / MA-4680).